We begin with the raw amino-acid sequence, 221 residues long: Cysteine-rich venom protein (221 aa).

Gly-1 is a signal peptide. One can recognise an SCP domain in the interval 21–148; that stretch reads DLHNSLRRSV…EYKYFYVCQY (128 aa). Intrachain disulfides connect Cys-57–Cys-135, Cys-74–Cys-149, Cys-130–Cys-146, Cys-168–Cys-175, Cys-171–Cys-180, Cys-184–Cys-216, Cys-193–Cys-210, and Cys-201–Cys-214. Positions 184–216 constitute a ShKT domain; sequence CTHEDKFTNCKDLVKQGCNNNYLKTNCPASCSC.

The protein belongs to the CRISP family. In terms of tissue distribution, expressed by the venom gland.

The protein resides in the secreted. Blocks contraction of smooth muscle elicited by high potassium-induced depolarization, but does not block caffeine-stimulated contraction. May target voltage-gated calcium channels in smooth muscle. This chain is Cysteine-rich venom protein, found in Vipera nikolskii (Nikolsky's adder).